A 380-amino-acid chain; its full sequence is Chaperone protein DnaJ (380 aa).

Residues 5–70 (DYYEILGVAK…QKRAAYDQYG (66 aa)) enclose the J domain. A CR-type zinc finger spans residues 135 to 213 (GVSKEIRIPT…CHGHGRVEKS (79 aa)). Zn(2+) is bound by residues Cys-148, Cys-151, Cys-165, Cys-168, Cys-187, Cys-190, Cys-201, and Cys-204. 4 CXXCXGXG motif repeats span residues 148 to 155 (CGVCHGSG), 165 to 172 (CSTCHGAG), 187 to 194 (CPTCHGRG), and 201 to 208 (CNACHGHG).

Belongs to the DnaJ family. In terms of assembly, homodimer. Zn(2+) serves as cofactor.

The protein localises to the cytoplasm. Its function is as follows. Participates actively in the response to hyperosmotic and heat shock by preventing the aggregation of stress-denatured proteins and by disaggregating proteins, also in an autonomous, DnaK-independent fashion. Unfolded proteins bind initially to DnaJ; upon interaction with the DnaJ-bound protein, DnaK hydrolyzes its bound ATP, resulting in the formation of a stable complex. GrpE releases ADP from DnaK; ATP binding to DnaK triggers the release of the substrate protein, thus completing the reaction cycle. Several rounds of ATP-dependent interactions between DnaJ, DnaK and GrpE are required for fully efficient folding. Also involved, together with DnaK and GrpE, in the DNA replication of plasmids through activation of initiation proteins. The protein is Chaperone protein DnaJ of Erwinia tasmaniensis (strain DSM 17950 / CFBP 7177 / CIP 109463 / NCPPB 4357 / Et1/99).